Consider the following 405-residue polypeptide: Eukaryotic initiation factor 4A (405 aa).

A Q motif motif is present at residues 31–59 (ECFEALNLEGDLLRGIFAYGFEKPSAIQQ). A Helicase ATP-binding domain is found at 62 to 232 (IKPILDGYDT…TQFMRDPKRI (171 aa)). Residue 75–82 (AQSGTGKT) coordinates ATP. The DEAD box signature appears at 180-183 (DEAD). The Helicase C-terminal domain occupies 243–404 (GIRQFYVGVE…EMPMGITDIL (162 aa)).

Belongs to the DEAD box helicase family. eIF4A subfamily. EIF4F is a multi-subunit complex, the composition of which varies with external and internal environmental conditions. It is composed of at least EIF4A, EIF4E and EIF4G.

The enzyme catalyses ATP + H2O = ADP + phosphate + H(+). Functionally, ATP-dependent RNA helicase which is a subunit of the eIF4F complex involved in cap recognition and is required for mRNA binding to ribosome. In the current model of translation initiation, eIF4A unwinds RNA secondary structures in the 5'-UTR of mRNAs which is necessary to allow efficient binding of the small ribosomal subunit, and subsequent scanning for the initiator codon. The chain is Eukaryotic initiation factor 4A (EIF4-A) from Cryptosporidium parvum.